The chain runs to 141 residues: Hemoglobin subunit alpha-D (141 aa).

A Globin domain is found at 1–141 (MLTADDKKLL…VAAVLAEKYR (141 aa)). 2 residues coordinate heme b: histidine 58 and histidine 87.

Belongs to the globin family. As to quaternary structure, heterotetramer of two alpha-D chains and two beta chains. As to expression, red blood cells.

Its function is as follows. Involved in oxygen transport from the lung to the various peripheral tissues. This chain is Hemoglobin subunit alpha-D (HBAD), found in Chloephaga melanoptera (Andean goose).